A 581-amino-acid polypeptide reads, in one-letter code: Activating signal cointegrator 1 (581 aa).

Position 2 is an N-acetylalanine (A2). The segment at D100–P121 is disordered. A C4-type zinc finger spans residues G167–D219. A mediates interaction with DDRGK1 region spans residues C200 to K300. At S276 the chain carries Phosphoserine. At Y289 the chain carries Phosphotyrosine. Positions K300–Q400 are mediates interaction with UFL1. Residues K324 and K334 each participate in a glycyl lysine isopeptide (Lys-Gly) (interchain with G-Cter in UFM1) cross-link. The segment covering Q390–S406 has biased composition (polar residues). The interval Q390–R410 is disordered. One can recognise an ASCH domain in the interval L437–Q531.

Interacts with the thyroid hormone receptor/TR (via the ligand-binding domain); this interaction requires the presence of thyroid hormone. Interacts with the androgen receptor/AR; in an androgen, testosterone and dihydrotestosterone-dependent manner. Interacts with ESR1 (estrogen ligand-bound); competes with UFSP2. Interacts with UFSP2; competes with ligand-bound ESR1. Interacts with DDRGK1 and UFL1; the interaction with DDRGK1 is direct. Interacts with NCOA1. Interacts with EP300. Part of the ASC-1 complex, that contains TRIP4, ASCC1, ASCC2 and ASCC3. Identified in the RQT (ribosome quality control trigger) complex, that contains ASCC2, ASCC3 and TRIP4. Interacts with NEK6. Interacts with CSRP1. Interacts with ZCCHC4. In terms of processing, phosphorylated by NEK6. Post-translationally, polyufmylated by the UFM1-conjugating system composed of the enzymes UBA5, UFC1 and UFL1. Deufmylated by the protease UFSP2. Ufmylation of TRIP4 is promoted by ligand-bound nuclear receptors that compete with UFSP2 for interaction with TRIP4. Nuclear receptors-induced ufmylation promotes the recruitment of additional transcriptional coactivators like EP300 and NCOA1 and therefore the assembly of a coactivator complex facilitating nuclear receptor-mediated transcription. As to expression, ubiquitously expressed. Expressed in the spinal cord, brain, paraspinal ganglia, thyroid, and submandibular glands. Expressed at low level in all the muscles (at protein level) but with higher expression in axial than in limb muscles.

It localises to the nucleus. The protein resides in the cytoplasm. Its subcellular location is the cytosol. It is found in the cytoskeleton. The protein localises to the microtubule organizing center. It localises to the centrosome. Functionally, transcription coactivator which associates with nuclear receptors, transcriptional coactivators including EP300, CREBBP and NCOA1, and basal transcription factors like TBP and TFIIA to facilitate nuclear receptors-mediated transcription. May thereby play an important role in establishing distinct coactivator complexes under different cellular conditions. Plays a role in thyroid hormone receptor and estrogen receptor transactivation. Also involved in androgen receptor transactivation. Plays a pivotal role in the transactivation of NF-kappa-B, SRF and AP1. Acts as a mediator of transrepression between nuclear receptor and either AP1 or NF-kappa-B. May play a role in the development of neuromuscular junction. May play a role in late myogenic differentiation. Also functions as part of the RQC trigger (RQT) complex that activates the ribosome quality control (RQC) pathway, a pathway that degrades nascent peptide chains during problematic translation. The polypeptide is Activating signal cointegrator 1 (Mus musculus (Mouse)).